We begin with the raw amino-acid sequence, 429 residues long: Enolase (429 aa).

Q163 serves as a coordination point for (2R)-2-phosphoglycerate. Residue E205 is the Proton donor of the active site. D242, E285, and D312 together coordinate Mg(2+). The (2R)-2-phosphoglycerate site is built by K337, R366, S367, and K388. K337 acts as the Proton acceptor in catalysis.

The protein belongs to the enolase family. Mg(2+) serves as cofactor.

Its subcellular location is the cytoplasm. It localises to the secreted. The protein resides in the cell surface. It catalyses the reaction (2R)-2-phosphoglycerate = phosphoenolpyruvate + H2O. It participates in carbohydrate degradation; glycolysis; pyruvate from D-glyceraldehyde 3-phosphate: step 4/5. Its function is as follows. Catalyzes the reversible conversion of 2-phosphoglycerate (2-PG) into phosphoenolpyruvate (PEP). It is essential for the degradation of carbohydrates via glycolysis. In Oceanobacillus iheyensis (strain DSM 14371 / CIP 107618 / JCM 11309 / KCTC 3954 / HTE831), this protein is Enolase.